We begin with the raw amino-acid sequence, 111 residues long: Nucleoid-associated protein NMC1380 (111 aa).

It belongs to the YbaB/EbfC family. Homodimer.

The protein localises to the cytoplasm. It is found in the nucleoid. Binds to DNA and alters its conformation. May be involved in regulation of gene expression, nucleoid organization and DNA protection. The protein is Nucleoid-associated protein NMC1380 of Neisseria meningitidis serogroup C / serotype 2a (strain ATCC 700532 / DSM 15464 / FAM18).